Here is a 292-residue protein sequence, read N- to C-terminus: Aspartate carbamoyltransferase catalytic subunit (292 aa).

Carbamoyl phosphate contacts are provided by Arg-50 and Thr-51. Lys-78 contacts L-aspartate. Carbamoyl phosphate-binding residues include Arg-100, His-128, and Gln-131. Positions 161 and 211 each coordinate L-aspartate. Carbamoyl phosphate is bound by residues Gly-250 and Pro-251.

The protein belongs to the aspartate/ornithine carbamoyltransferase superfamily. ATCase family. As to quaternary structure, heterododecamer (2C3:3R2) of six catalytic PyrB chains organized as two trimers (C3), and six regulatory PyrI chains organized as three dimers (R2).

It catalyses the reaction carbamoyl phosphate + L-aspartate = N-carbamoyl-L-aspartate + phosphate + H(+). It participates in pyrimidine metabolism; UMP biosynthesis via de novo pathway; (S)-dihydroorotate from bicarbonate: step 2/3. In terms of biological role, catalyzes the condensation of carbamoyl phosphate and aspartate to form carbamoyl aspartate and inorganic phosphate, the committed step in the de novo pyrimidine nucleotide biosynthesis pathway. The chain is Aspartate carbamoyltransferase catalytic subunit from Nitratiruptor sp. (strain SB155-2).